We begin with the raw amino-acid sequence, 190 residues long: Nucleoside triphosphate pyrophosphatase (190 aa).

D69 acts as the Proton acceptor in catalysis.

Belongs to the Maf family. A divalent metal cation serves as cofactor.

It localises to the cytoplasm. It carries out the reaction a ribonucleoside 5'-triphosphate + H2O = a ribonucleoside 5'-phosphate + diphosphate + H(+). The catalysed reaction is a 2'-deoxyribonucleoside 5'-triphosphate + H2O = a 2'-deoxyribonucleoside 5'-phosphate + diphosphate + H(+). Its function is as follows. Nucleoside triphosphate pyrophosphatase. May have a dual role in cell division arrest and in preventing the incorporation of modified nucleotides into cellular nucleic acids. The polypeptide is Nucleoside triphosphate pyrophosphatase (Helicobacter pylori (strain J99 / ATCC 700824) (Campylobacter pylori J99)).